We begin with the raw amino-acid sequence, 162 residues long: Inorganic pyrophosphatase (162 aa).

Residue glutamate 8 participates in Mg(2+) binding. Lysine 16, arginine 30, and tyrosine 42 together coordinate substrate. Positions 52, 57, 84, and 89 each coordinate Mg(2+). Residue aspartate 89 is the Proton acceptor of the active site. Substrate is bound at residue tyrosine 126.

It belongs to the PPase family. Homohexamer. Requires Mg(2+) as cofactor.

The protein resides in the cytoplasm. The enzyme catalyses diphosphate + H2O = 2 phosphate + H(+). Its function is as follows. Catalyzes the hydrolysis of inorganic pyrophosphate (PPi) forming two phosphate ions. The chain is Inorganic pyrophosphatase from Mycobacterium bovis (strain ATCC BAA-935 / AF2122/97).